Consider the following 315-residue polypeptide: Calumenin (315 aa).

A signal peptide spans 1–19 (MDLRQFLMCLSLCTAFALS). Serine 44 carries the phosphoserine modification. Phosphotyrosine is present on tyrosine 47. Threonine 65 is modified (phosphothreonine). 6 consecutive EF-hand domains span residues 68–103 (ESKERLGMIVDKIDADKDGFVTEGELKSWIKHAQKK), 104–139 (YIYDNVENQWQEFDLNQDGLISWDEYRNVTYGTYLD), 151–186 (QMMVRDERRFKMADKDGDLIATKEEFTAFLHPEEYD), 188–223 (MKDIVVQEPMEDIDKNADGFIDLEEYIGDMYSHDGN), 229–264 (WVKTEREQFVEFRDKNRDGKMDKEETKDWILPSDYD), and 265–300 (HAEAEARHLVYESDQNKDGKLTKEEIVDKYDLFVGS). Position 69 is a phosphoserine (serine 69). Residues aspartate 81, aspartate 83, aspartate 85, glutamate 92, aspartate 117, asparagine 119, aspartate 121, and glutamate 128 each coordinate Ca(2+). Asparagine 131 carries N-linked (GlcNAc...) asparagine glycosylation. Aspartate 164 is a Ca(2+) binding site. Lysine 165 carries the N6-acetyllysine modification. Ca(2+)-binding residues include aspartate 166, aspartate 168, glutamate 175, aspartate 201, asparagine 203, aspartate 205, glutamate 212, aspartate 242, asparagine 244, aspartate 246, lysine 248, and glutamate 253. Residue threonine 254 is modified to Phosphothreonine. Phosphoserine is present on residues serine 261 and serine 277. Residues aspartate 278, asparagine 280, aspartate 282, lysine 284, and glutamate 289 each contribute to the Ca(2+) site. Positions 312–315 (HDEF) match the Prevents secretion from ER motif.

It belongs to the CREC family. Interacts with GGCX.

Its subcellular location is the endoplasmic reticulum membrane. It localises to the golgi apparatus. The protein resides in the secreted. It is found in the melanosome. The protein localises to the sarcoplasmic reticulum lumen. In terms of biological role, involved in regulation of vitamin K-dependent carboxylation of multiple N-terminal glutamate residues. Seems to inhibit gamma-carboxylase GGCX. Binds 7 calcium ions with a low affinity. This is Calumenin (CALU) from Bos taurus (Bovine).